The chain runs to 381 residues: L-lactate dehydrogenase (381 aa).

One can recognise an FMN hydroxy acid dehydrogenase domain in the interval 1-380 (MIISASTDYR…SRDSLVRELG (380 aa)). A substrate-binding site is contributed by Tyr-24. FMN is bound by residues Ser-106 and Gln-127. Residue Tyr-129 participates in substrate binding. FMN is bound at residue Thr-155. Position 164 (Arg-164) interacts with substrate. Lys-251 contributes to the FMN binding site. His-275 serves as the catalytic Proton acceptor. Arg-278 is a binding site for substrate. 306–330 (DSGIRSGLDVVRMIALGADTVLIGR) lines the FMN pocket.

The protein belongs to the FMN-dependent alpha-hydroxy acid dehydrogenase family. As to quaternary structure, homotetramer. Requires FMN as cofactor.

It is found in the cell inner membrane. It carries out the reaction (S)-lactate + A = pyruvate + AH2. In terms of biological role, catalyzes the conversion of L-lactate to pyruvate. Is coupled to the respiratory chain. The polypeptide is L-lactate dehydrogenase (Pseudomonas putida (strain W619)).